A 159-amino-acid chain; its full sequence is Xanthine dehydrogenase iron-sulfur-binding subunit (159 aa).

The 76-residue stretch at 7 to 82 (ITIECTINGM…GKEIRTLEGE (76 aa)) folds into the 2Fe-2S ferredoxin-type domain. 3 residues coordinate [2Fe-2S] cluster: Cys44, Cys49, and Cys52.

Heterotrimer of XdhA, XdhB and XdhC. Requires [2Fe-2S] cluster as cofactor.

It functions in the pathway purine metabolism; hypoxanthine degradation; urate from hypoxanthine: step 1/2. Functionally, iron-sulfur subunit of the xanthine dehydrogenase complex. This Escherichia coli O157:H7 protein is Xanthine dehydrogenase iron-sulfur-binding subunit (xdhC).